We begin with the raw amino-acid sequence, 438 residues long: Enolase (438 aa).

Residues histidine 159 and glutamate 168 each contribute to the substrate site. Catalysis depends on glutamate 211, which acts as the Proton donor. Mg(2+) is bound by residues aspartate 246, glutamate 297, and aspartate 322. Substrate-binding residues include glutamate 297 and aspartate 322. Lysine 347 acts as the Proton acceptor in catalysis. Substrate contacts are provided by residues 374 to 377 and lysine 398; that span reads SHRS.

The protein belongs to the enolase family. Homodimer. Mg(2+) is required as a cofactor.

It is found in the cytoplasm. It carries out the reaction (2R)-2-phosphoglycerate = phosphoenolpyruvate + H2O. It functions in the pathway carbohydrate degradation; glycolysis; pyruvate from D-glyceraldehyde 3-phosphate: step 4/5. This Penicillium citrinum protein is Enolase (enoA).